Consider the following 65-residue polypeptide: Large ribosomal subunit protein bL35 (65 aa).

Basic residues predominate over residues 1-11 (MPKIKTRRSAA). 2 disordered regions span residues 1–24 (MPKI…KFKR) and 41–65 (RMRL…MPYA).

This sequence belongs to the bacterial ribosomal protein bL35 family.

The chain is Large ribosomal subunit protein bL35 from Nitratidesulfovibrio vulgaris (strain DSM 19637 / Miyazaki F) (Desulfovibrio vulgaris).